The sequence spans 452 residues: Probable pectate lyase 9 (452 aa).

The N-terminal stretch at 1 to 25 (MATSSLKLTSACFVLLFIFVGCVLT) is a signal peptide. N-linked (GlcNAc...) asparagine glycans are attached at residues asparagine 88, asparagine 139, asparagine 214, and asparagine 233. Position 250 (aspartate 250) interacts with Ca(2+). The N-linked (GlcNAc...) asparagine glycan is linked to asparagine 271. Ca(2+) is bound by residues aspartate 274 and aspartate 278. 2 N-linked (GlcNAc...) asparagine glycosylation sites follow: asparagine 281 and asparagine 305. Arginine 330 is a catalytic residue. Asparagine 374 is a glycosylation site (N-linked (GlcNAc...) asparagine).

The protein belongs to the polysaccharide lyase 1 family. It depends on Ca(2+) as a cofactor.

The enzyme catalyses Eliminative cleavage of (1-&gt;4)-alpha-D-galacturonan to give oligosaccharides with 4-deoxy-alpha-D-galact-4-enuronosyl groups at their non-reducing ends.. It functions in the pathway glycan metabolism; pectin degradation; 2-dehydro-3-deoxy-D-gluconate from pectin: step 2/5. The sequence is that of Probable pectate lyase 9 from Arabidopsis thaliana (Mouse-ear cress).